We begin with the raw amino-acid sequence, 403 residues long: Phosphoglycerate kinase (403 aa).

Substrate is bound by residues 21–23, R36, 59–62, R119, and R159; these read DFN and HLGR. ATP contacts are provided by residues K214, G301, E332, and 359-362; that span reads GGDS.

The protein belongs to the phosphoglycerate kinase family. Monomer.

Its subcellular location is the cytoplasm. It carries out the reaction (2R)-3-phosphoglycerate + ATP = (2R)-3-phospho-glyceroyl phosphate + ADP. It participates in carbohydrate degradation; glycolysis; pyruvate from D-glyceraldehyde 3-phosphate: step 2/5. This is Phosphoglycerate kinase from Lactobacillus helveticus (strain DPC 4571).